Reading from the N-terminus, the 299-residue chain is Bifunctional protein FolD 1 (299 aa).

NADP(+) is bound by residues glycine 168–serine 170, serine 193, and isoleucine 234.

This sequence belongs to the tetrahydrofolate dehydrogenase/cyclohydrolase family. In terms of assembly, homodimer.

The catalysed reaction is (6R)-5,10-methylene-5,6,7,8-tetrahydrofolate + NADP(+) = (6R)-5,10-methenyltetrahydrofolate + NADPH. It catalyses the reaction (6R)-5,10-methenyltetrahydrofolate + H2O = (6R)-10-formyltetrahydrofolate + H(+). The protein operates within one-carbon metabolism; tetrahydrofolate interconversion. Its function is as follows. Catalyzes the oxidation of 5,10-methylenetetrahydrofolate to 5,10-methenyltetrahydrofolate and then the hydrolysis of 5,10-methenyltetrahydrofolate to 10-formyltetrahydrofolate. In Mesorhizobium japonicum (strain LMG 29417 / CECT 9101 / MAFF 303099) (Mesorhizobium loti (strain MAFF 303099)), this protein is Bifunctional protein FolD 1.